A 684-amino-acid chain; its full sequence is Methionine--tRNA ligase (684 aa).

Positions 14–24 match the 'HIGH' region motif; it reads PYANGAIHLGH. Cys-145, Cys-148, Cys-158, and Cys-161 together coordinate Zn(2+). The 'KMSKS' region signature appears at 330–334; the sequence is KMSKS. An ATP-binding site is contributed by Lys-333. A tRNA-binding domain is found at 582–684; that stretch reads DFAKLDLRVA…CGIRPGMQVK (103 aa).

It belongs to the class-I aminoacyl-tRNA synthetase family. MetG type 1 subfamily. Homodimer. It depends on Zn(2+) as a cofactor.

The protein localises to the cytoplasm. It catalyses the reaction tRNA(Met) + L-methionine + ATP = L-methionyl-tRNA(Met) + AMP + diphosphate. In terms of biological role, is required not only for elongation of protein synthesis but also for the initiation of all mRNA translation through initiator tRNA(fMet) aminoacylation. In Haemophilus ducreyi (strain 35000HP / ATCC 700724), this protein is Methionine--tRNA ligase.